The following is a 187-amino-acid chain: MQKRPNPRGNPNQDKFAHIRINEQITNVASIRLVSDEGSDIVTLDEALRRAKEANLDLVEVSGDQDVHVCKLIDFGKYKFELLKKTKEAKKKQHVVTVKEIKIRPRIDNHDFEIKKRHALEFLQKGDKVKVTLRFRGREMVHSEIGMNIVNRFVEDLKEHASPEKMPVHDGKTIVVVMNPIGEKPKG.

The protein belongs to the IF-3 family. Monomer.

The protein localises to the cytoplasm. IF-3 binds to the 30S ribosomal subunit and shifts the equilibrium between 70S ribosomes and their 50S and 30S subunits in favor of the free subunits, thus enhancing the availability of 30S subunits on which protein synthesis initiation begins. The sequence is that of Translation initiation factor IF-3 from Leptospira biflexa serovar Patoc (strain Patoc 1 / Ames).